Reading from the N-terminus, the 73-residue chain is UPF0435 protein Lm4b_01721 (73 aa).

It belongs to the UPF0435 family.

The sequence is that of UPF0435 protein Lm4b_01721 from Listeria monocytogenes serotype 4b (strain CLIP80459).